Here is a 79-residue protein sequence, read N- to C-terminus: Acyl carrier protein (79 aa).

Residues serine 2–lysine 77 form the Carrier domain. O-(pantetheine 4'-phosphoryl)serine is present on serine 37.

It belongs to the acyl carrier protein (ACP) family. In terms of processing, 4'-phosphopantetheine is transferred from CoA to a specific serine of apo-ACP by AcpS. This modification is essential for activity because fatty acids are bound in thioester linkage to the sulfhydryl of the prosthetic group.

It localises to the cytoplasm. It participates in lipid metabolism; fatty acid biosynthesis. Its function is as follows. Carrier of the growing fatty acid chain in fatty acid biosynthesis. The sequence is that of Acyl carrier protein from Pseudoalteromonas atlantica (strain T6c / ATCC BAA-1087).